We begin with the raw amino-acid sequence, 93 residues long: UPF0367 protein gsr3177 (93 aa).

It belongs to the UPF0367 family.

This chain is UPF0367 protein gsr3177, found in Gloeobacter violaceus (strain ATCC 29082 / PCC 7421).